The primary structure comprises 221 residues: Fanconi anemia core complex-associated protein 24 (221 aa).

In terms of assembly, belongs to the multisubunit FA complex composed of FANCA, FANCB, FANCC, FANCE, FANCF, FANCG, FANCL/PHF9, FANCM and FAAP24. Interacts with FANCM.

It localises to the nucleus. Plays a role in DNA repair through recruitment of the FA core complex to damaged DNA. Regulates FANCD2 monoubiquitination upon DNA damage. Induces chromosomal instability as well as hypersensitivity to DNA cross-linking agents, when repressed. Targets FANCM/FAAP24 complex to the DNA, preferentially to single strand DNA. The polypeptide is Fanconi anemia core complex-associated protein 24 (Mus musculus (Mouse)).